The primary structure comprises 356 residues: (+)-(1(10)E,4E,6S,7R)-germacradien-6-ol synthase (356 aa).

The Mg(2+) site is built by Asp86 and Asp91. Residues 86–91 carry the DDXXXD motif motif; that stretch reads DDEYCD. Arg181 contributes to the substrate binding site. Mg(2+)-binding residues include Asn227 and Ser231. Residue Lys234 coordinates substrate. Glu235 is a binding site for Mg(2+). 314–315 is a substrate binding site; that stretch reads RY.

It belongs to the terpene synthase family. Mg(2+) serves as cofactor.

The enzyme catalyses (2E,6E)-farnesyl diphosphate + H2O = (+)-(1(10)E,4E,6S,7R)-germacradien-6-ol + diphosphate. It participates in secondary metabolite biosynthesis; terpenoid biosynthesis. Catalyzes the conversion of (2E,6E)-farnesyl diphosphate (FPP) to yield the sesquiterpene (+)-(1(10)E,4E,6S,7R)-germacradien-6-ol via a putative 1,10-cyclization, which could require the abstraction of the pyrophosphate from FPP to yield the (E,E)-germacradienyl cation. The only accepted substrate is farnesyl diphosphate (FPP). This is (+)-(1(10)E,4E,6S,7R)-germacradien-6-ol synthase from Streptomyces pratensis (strain ATCC 33331 / IAF-45CD).